The sequence spans 630 residues: tRNA uridine 5-carboxymethylaminomethyl modification enzyme MnmG (630 aa).

FAD is bound at residue 15 to 20 (GAGHAG). 274–288 (GPRYCPSIEDKIVRF) contributes to the NAD(+) binding site.

This sequence belongs to the MnmG family. As to quaternary structure, homodimer. Heterotetramer of two MnmE and two MnmG subunits. Requires FAD as cofactor.

It is found in the cytoplasm. Functionally, NAD-binding protein involved in the addition of a carboxymethylaminomethyl (cmnm) group at the wobble position (U34) of certain tRNAs, forming tRNA-cmnm(5)s(2)U34. The sequence is that of tRNA uridine 5-carboxymethylaminomethyl modification enzyme MnmG from Alkaliphilus oremlandii (strain OhILAs) (Clostridium oremlandii (strain OhILAs)).